We begin with the raw amino-acid sequence, 274 residues long: Kit ligand (274 aa).

A signal peptide spans 1 to 25 (MKKTQTWIITCIYLQLLLFNPLVRT). Over 26–215 (KGICRNRVTD…ANPLGDSNLQ (190 aa)) the chain is Extracellular. Cystine bridges form between C29–C114 and C68–C164. 4 N-linked (GlcNAc...) asparagine glycosylation sites follow: N90, N97, N145, and N196. Residues 216–238 (WAAMALPAFFSLVIGFAFGALYW) form a helical membrane-spanning segment. Topologically, residues 239 to 274 (KKKQPNLTRTAENIQINEEDNEISMLQEKEREFQEV) are cytoplasmic.

This sequence belongs to the SCF family. Homodimer, non-covalently linked. Heterotetramer with KIT, binding two KIT molecules; thereby mediates KIT dimerization and subsequent activation by autophosphorylation. A soluble form is produced by proteolytic processing of isoform 1 in the extracellular domain.

The protein localises to the cytoplasm. It is found in the cytoskeleton. It localises to the cell membrane. Its subcellular location is the cell projection. The protein resides in the lamellipodium. The protein localises to the filopodium. It is found in the secreted. Functionally, ligand for the receptor-type protein-tyrosine kinase KIT. Plays an essential role in the regulation of cell survival and proliferation, hematopoiesis, stem cell maintenance, gametogenesis, mast cell development, migration and function, and in melanogenesis. KITLG/SCF binding can activate several signaling pathways. Promotes phosphorylation of PIK3R1, the regulatory subunit of phosphatidylinositol 3-kinase, and subsequent activation of the kinase AKT1. KITLG/SCF and KIT also transmit signals via GRB2 and activation of RAS, RAF1 and the MAP kinases MAPK1/ERK2 and/or MAPK3/ERK1. KITLG/SCF and KIT promote activation of STAT family members STAT1, STAT3 and STAT5. KITLG/SCF and KIT promote activation of PLCG1, leading to the production of the cellular signaling molecules diacylglycerol and inositol 1,4,5-trisphosphate. KITLG/SCF acts synergistically with other cytokines, probably interleukins. In Neovison vison (American mink), this protein is Kit ligand (KITLG).